The sequence spans 300 residues: Fructose-bisphosphate aldolase class 1 (300 aa).

Glu-181 functions as the Proton acceptor in the catalytic mechanism. Lys-218 (schiff-base intermediate with dihydroxyacetone-P) is an active-site residue.

The protein belongs to the class I fructose-bisphosphate aldolase family.

It catalyses the reaction beta-D-fructose 1,6-bisphosphate = D-glyceraldehyde 3-phosphate + dihydroxyacetone phosphate. Its pathway is carbohydrate degradation; glycolysis; D-glyceraldehyde 3-phosphate and glycerone phosphate from D-glucose: step 4/4. The chain is Fructose-bisphosphate aldolase class 1 (fda) from Synechocystis sp. (strain ATCC 27184 / PCC 6803 / Kazusa).